Reading from the N-terminus, the 76-residue chain is Protein CASC2, isoforms 1/2 (76 aa).

The disordered stretch occupies residues 1–20 (MAGTRGLMLLGPGPVAGPRD).

This is Protein CASC2, isoforms 1/2 (CASC2) from Homo sapiens (Human).